We begin with the raw amino-acid sequence, 402 residues long: Nicotinate phosphoribosyltransferase (402 aa).

Histidine 226 is subject to Phosphohistidine; by autocatalysis.

Belongs to the NAPRTase family. Post-translationally, transiently phosphorylated on a His residue during the reaction cycle. Phosphorylation strongly increases the affinity for substrates and increases the rate of nicotinate D-ribonucleotide production. Dephosphorylation regenerates the low-affinity form of the enzyme, leading to product release.

The enzyme catalyses nicotinate + 5-phospho-alpha-D-ribose 1-diphosphate + ATP + H2O = nicotinate beta-D-ribonucleotide + ADP + phosphate + diphosphate. It participates in cofactor biosynthesis; NAD(+) biosynthesis; nicotinate D-ribonucleotide from nicotinate: step 1/1. In terms of biological role, catalyzes the synthesis of beta-nicotinate D-ribonucleotide from nicotinate and 5-phospho-D-ribose 1-phosphate at the expense of ATP. This is Nicotinate phosphoribosyltransferase from Chromobacterium violaceum (strain ATCC 12472 / DSM 30191 / JCM 1249 / CCUG 213 / NBRC 12614 / NCIMB 9131 / NCTC 9757 / MK).